A 251-amino-acid chain; its full sequence is 5-oxoprolinase subunit A 2 (251 aa).

This sequence belongs to the LamB/PxpA family. As to quaternary structure, forms a complex composed of PxpA, PxpB and PxpC.

The catalysed reaction is 5-oxo-L-proline + ATP + 2 H2O = L-glutamate + ADP + phosphate + H(+). In terms of biological role, catalyzes the cleavage of 5-oxoproline to form L-glutamate coupled to the hydrolysis of ATP to ADP and inorganic phosphate. The sequence is that of 5-oxoprolinase subunit A 2 from Pseudomonas syringae pv. tomato (strain ATCC BAA-871 / DC3000).